The chain runs to 216 residues: Sperm microtubule inner protein 8 (216 aa).

As to quaternary structure, microtubule inner protein component of sperm flagellar doublet microtubules. As to expression, expressed in sperm.

Its subcellular location is the cytoplasm. It localises to the cytoskeleton. The protein resides in the flagellum axoneme. Functionally, microtubule inner protein (MIP) part of the dynein-decorated doublet microtubules (DMTs) in flagellum axoneme. May serve to reinforce and thus stabilize the microtubule structure in the sperm flagella. In Bos taurus (Bovine), this protein is Sperm microtubule inner protein 8 (SPMIP8).